Here is a 565-residue protein sequence, read N- to C-terminus: Zinc finger protein 512 (565 aa).

Residues 1–30 form a disordered region; sequence MSSRLGAVPATSGPTTFKQQRSTRIVGAKN. Residues 12-23 show a composition bias toward polar residues; it reads SGPTTFKQQRST. Glycyl lysine isopeptide (Lys-Gly) (interchain with G-Cter in SUMO2) cross-links involve residues Lys18 and Lys83. Positions 85–147 are disordered; it reads AATSHVEGSG…QARRIRKEPP (63 aa). Over residues 118–129 the composition is skewed to basic residues; sequence KKHKLYGRKQRP. A C2H2-type 1 zinc finger spans residues 196 to 219; it reads FTCHHCGKQLRSLAGMKYHVMANH. Lys226 is covalently cross-linked (Glycyl lysine isopeptide (Lys-Gly) (interchain with G-Cter in SUMO2)). Residues 286 to 309 form a C2H2-type 2 zinc finger; it reads LKCHHCGKPYRSKAGLAYHLRSEH. Lys332 is covalently cross-linked (Glycyl lysine isopeptide (Lys-Gly) (interchain with G-Cter in SUMO2)). The segment at 405 to 429 adopts a C2H2-type 3; atypical zinc-finger fold; it reads IQCPNQGCEAVYSSVSGLKAHLGSC. The C2H2-type 4 zinc-finger motif lies at 439 to 462; sequence YKCLLCQKEFVSESGVKYHINSVH. The segment covering 484 to 493 has biased composition (basic and acidic residues); the sequence is KQRQQEEEKR. A disordered region spans residues 484 to 565; the sequence is KQRQQEEEKR…PKTNHKRGRK (82 aa). The segment covering 494–507 has biased composition (basic residues); it reads RQQHRSRRSLRRRQ. The segment covering 522–531 has biased composition (basic and acidic residues); that stretch reads VGKDQRRNEE. The span at 554-565 shows a compositional bias: basic residues; sequence KPPKTNHKRGRK.

Belongs to the krueppel C2H2-type zinc-finger protein family.

The protein resides in the nucleus. Functionally, may be involved in transcriptional regulation. In Macaca fascicularis (Crab-eating macaque), this protein is Zinc finger protein 512 (ZNF512).